Here is a 250-residue protein sequence, read N- to C-terminus: MPAPGSEGIWLWLGTAGMFLGMLYFIARGWGETDGRRQKFYIATILITAIAFVNYLAMALGFGLTFIEFGGEQHPIYWARYTDWLFTTPLLLYDLGLLAGADRNTIYSLVSLDVLMIGTGVVATLSAGSGVLSAGAERLVWWGISTAFLLVLLYFLFSSLSGRVANLPSDTRSTFKTLRNLVTVVWLVYPVWWLVGSEGLGLVGIGIETAGFMVIDLVAKVGFGIILLRSHGVLDGAAETTGTGATPADD.

Helical transmembrane passes span 7 to 27, 42 to 62, 81 to 101, 114 to 134, 139 to 159, 185 to 205, and 207 to 227; these read EGIWLWLGTAGMFLGMLYFIA, IATILITAIAFVNYLAMALGF, YTDWLFTTPLLLYDLGLLAGA, VLMIGTGVVATLSAGSGVLSA, LVWWGISTAFLLVLLYFLFSS, VWLVYPVWWLVGSEGLGLVGI, and IETAGFMVIDLVAKVGFGIIL. Lysine 220 is modified (N6-(retinylidene)lysine).

This sequence belongs to the archaeal/bacterial/fungal opsin family. In terms of processing, the covalent binding of retinal to the apoprotein, bacterioopsin, generates bacteriorhodopsin.

Its subcellular location is the membrane. In terms of biological role, light-driven proton pump. This chain is Bacteriorhodopsin-I (bop), found in Haloarcula marismortui (strain ATCC 43049 / DSM 3752 / JCM 8966 / VKM B-1809) (Halobacterium marismortui).